Consider the following 287-residue polypeptide: MSDVEETVDEYEEQEEAAVEEHEESVEEEAGGEARQGGGASAAEDGEEEEGREAEDGPVEESKPQAPGPFMPNLVPPKIPDGERVDFDDIHRKRMEKDLNELQTLIEAHFENRKKEEEELVSLKDRIEKRRAERAEQQRIRTEREKERQARLAEERARREEEESRRKAEDEARKKKALSNMMHFGGYIQKAQAERKSGKRQTEREKKKKILAERRKVLAIDHLNEDQLREKARELWQSIYDLEAEKFDLQEKFKQQKYEINVLRNRVNDNQKVSKTRGKAKVTGRWK.

2 stretches are compositionally biased toward acidic residues: residues 1-31 and 44-59; these read MSDV…EEAG and EDGE…DGPV. 2 disordered regions span residues 1-85 and 124-208; these read MSDV…GERV and KDRI…EKKK. The residue at position 2 (serine 2) is an N-acetylserine. Serine 2 bears the Phosphoserine; by CK2 mark. Pro residues predominate over residues 66 to 79; that stretch reads APGPFMPNLVPPKI. 2 stretches are compositionally biased toward basic and acidic residues: residues 124 to 173 and 192 to 208; these read KDRI…DEAR and QAER…EKKK. Phosphoserine; by PKC/PRKCA is present on serine 197. Residue threonine 202 is modified to Phosphothreonine; by PKC/PRKCA and RAF1. The residue at position 283 (threonine 283) is a Phosphothreonine; by PKC/PRKCA.

It belongs to the troponin T family. In terms of processing, phosphorylation at Thr-202 by PRKCA induces significant reduction in myofilament calcium sensitivity and actomyosin ATPase activity.

Functionally, troponin T is the tropomyosin-binding subunit of troponin, the thin filament regulatory complex which confers calcium-sensitivity to striated muscle actomyosin ATPase activity. The protein is Troponin T, cardiac muscle (TNNT2) of Ovis aries (Sheep).